The sequence spans 393 residues: MKLHEYQAKMLFAQYGIPIPKGLVCTTPNEAKESIAVIGYGPWIVKCQVHAGGRGKSGGVRIVRSKEEIQEFAKQWFGKHLITEQTNHIGQPVSKILVEAAIDIAQELYLGCLVDRSNQCIKFIASIQGGIDIENIAKEKPHLLHQIILDPLIGPQLYQSRDLAFKIGLSSKKQINQFNKIFMGLATLFLEKDLVMAEINPLVITRLGDLICLDGKLHVDSNALFRQPELCKMLDPSQEDKCETYAKQHNLNYIALNGNIGCLVNGAGLAMSTIDMVKFYGGEPANFLDVGGRVTQEKVTKAFQIILSDKKVKVILVNIFGGIVCCDVIAKGIINARLESGINIPVIVRLEGNNAKQGIQHLVNSILNIRIATNLTTAAKQAVALVEGKQCLF.

The region spanning 9-245 is the ATP-grasp domain; the sequence is KMLFAQYGIP…PSQEDKCETY (237 aa). ATP-binding positions include Lys-46, 53–55, Glu-99, Ile-102, and Glu-107; that span reads GRG. Mg(2+) is bound by residues Asn-200 and Asp-214. Residues Asn-265 and 322–324 contribute to the substrate site; that span reads GIV.

It belongs to the succinate/malate CoA ligase beta subunit family. In terms of assembly, heterotetramer of two alpha and two beta subunits. Requires Mg(2+) as cofactor.

It carries out the reaction succinate + ATP + CoA = succinyl-CoA + ADP + phosphate. It catalyses the reaction GTP + succinate + CoA = succinyl-CoA + GDP + phosphate. It participates in carbohydrate metabolism; tricarboxylic acid cycle; succinate from succinyl-CoA (ligase route): step 1/1. Functionally, succinyl-CoA synthetase functions in the citric acid cycle (TCA), coupling the hydrolysis of succinyl-CoA to the synthesis of either ATP or GTP and thus represents the only step of substrate-level phosphorylation in the TCA. The beta subunit provides nucleotide specificity of the enzyme and binds the substrate succinate, while the binding sites for coenzyme A and phosphate are found in the alpha subunit. The protein is Succinate--CoA ligase [ADP-forming] subunit beta of Baumannia cicadellinicola subsp. Homalodisca coagulata.